The following is a 158-amino-acid chain: Small ribosomal subunit protein uS10m (158 aa).

Belongs to the universal ribosomal protein uS10 family.

The protein resides in the mitochondrion. This Caenorhabditis briggsae protein is Small ribosomal subunit protein uS10m (mrps-10).